The chain runs to 347 residues: Ribosomal RNA large subunit methyltransferase M (347 aa).

S-adenosyl-L-methionine is bound by residues Ser184, 217-220, Asp236, Asp256, and Asp272; that span reads APGG. The active-site Proton acceptor is Lys301.

Belongs to the class I-like SAM-binding methyltransferase superfamily. RNA methyltransferase RlmE family. RlmM subfamily. In terms of assembly, monomer.

It is found in the cytoplasm. It carries out the reaction cytidine(2498) in 23S rRNA + S-adenosyl-L-methionine = 2'-O-methylcytidine(2498) in 23S rRNA + S-adenosyl-L-homocysteine + H(+). Its function is as follows. Catalyzes the 2'-O-methylation at nucleotide C2498 in 23S rRNA. The sequence is that of Ribosomal RNA large subunit methyltransferase M from Xanthomonas euvesicatoria pv. vesicatoria (strain 85-10) (Xanthomonas campestris pv. vesicatoria).